The chain runs to 309 residues: Protease HtpX homolog (309 aa).

2 helical membrane passes run 7-27 (FILL…IGGP) and 28-48 (TGML…YWNA). Zn(2+) is bound at residue His-134. Glu-135 is an active-site residue. His-138 contacts Zn(2+). The next 2 helical transmembrane spans lie at 149–169 (VTAT…FFGG) and 177–197 (PGGL…AMLV). Residue Glu-206 participates in Zn(2+) binding. Residues 289–309 (TRGRSGTAVPTGATGKSGPWG) are disordered.

The protein belongs to the peptidase M48B family. Zn(2+) is required as a cofactor.

It localises to the cell inner membrane. The sequence is that of Protease HtpX homolog from Caulobacter sp. (strain K31).